Reading from the N-terminus, the 845-residue chain is Protein translocase subunit SecA 1 (845 aa).

ATP-binding positions include Gln-91, 109–113, and Asp-498; that span reads GEGKT. A disordered region spans residues 795-845; sequence TDFGTAQHVSAEDGKEKAKKQPIVKGDKVGRNDPCPCGSGKKYKNCHGKEE. Zn(2+) contacts are provided by Cys-829, Cys-831, Cys-840, and His-841. Residues 835–845 are compositionally biased toward basic residues; sequence KKYKNCHGKEE.

The protein belongs to the SecA family. Monomer and homodimer. Part of the essential Sec protein translocation apparatus which comprises SecA, SecYEG and auxiliary proteins SecDF. Other proteins may also be involved. Zn(2+) serves as cofactor.

The protein localises to the cell membrane. The protein resides in the cytoplasm. It carries out the reaction ATP + H2O + cellular proteinSide 1 = ADP + phosphate + cellular proteinSide 2.. Functionally, part of the Sec protein translocase complex. Interacts with the SecYEG preprotein conducting channel. Has a central role in coupling the hydrolysis of ATP to the transfer of proteins into and across the cell membrane, serving as an ATP-driven molecular motor driving the stepwise translocation of polypeptide chains across the membrane. This is Protein translocase subunit SecA 1 from Staphylococcus haemolyticus (strain JCSC1435).